The sequence spans 338 residues: Heat-inducible transcription repressor HrcA (338 aa).

Belongs to the HrcA family.

Its function is as follows. Negative regulator of class I heat shock genes (grpE-dnaK-dnaJ and groELS operons). Prevents heat-shock induction of these operons. This chain is Heat-inducible transcription repressor HrcA, found in Bacillus cereus (strain ATCC 10987 / NRS 248).